A 549-amino-acid polypeptide reads, in one-letter code: Cation/acetate symporter ActP (549 aa).

Transmembrane regions (helical) follow at residues 33–53 (WQAI…TYWA), 77–97 (LAIA…ALVF), 103–123 (GLIY…LIAE), 148–168 (ILSA…QMVG), 183–203 (IAVV…GMLA), 206–226 (WVQI…AFMV), 262–282 (ISAL…PHIL), 303–323 (GFMG…IMLV), 355–375 (LFLG…VAGL), 404–424 (VSKI…FLFE), 428–448 (IAFM…PIIL), 464–484 (GGWL…TIWV), and 493–513 (IFPY…GIWF).

This sequence belongs to the sodium:solute symporter (SSF) (TC 2.A.21) family.

The protein resides in the cell inner membrane. Its function is as follows. Transports acetate. The polypeptide is Cation/acetate symporter ActP (Salmonella paratyphi C (strain RKS4594)).